The following is a 416-amino-acid chain: Formyl-CoA:oxalate CoA-transferase (416 aa).

Residues 17 to 18 (QS), Arg-38, 72 to 75 (LNTK), 96 to 98 (NFH), His-104, and 137 to 140 (KAYE) each bind CoA. Asp-169 serves as the catalytic Nucleophile. 248–250 (GGQ) is a binding site for substrate. 273–275 (QEQ) serves as a coordination point for CoA.

This sequence belongs to the CoA-transferase III family. Frc subfamily. Homodimer.

It carries out the reaction formyl-CoA + oxalate = oxalyl-CoA + formate. Its pathway is metabolic intermediate degradation; oxalate degradation; CO(2) and formate from oxalate: step 1/2. In terms of biological role, involved in the catabolism of oxalate and in the adapatation to low pH via the induction of the oxalate-dependent acid tolerance response (ATR). Catalyzes the transfer of the CoA moiety from formyl-CoA to oxalate. The polypeptide is Formyl-CoA:oxalate CoA-transferase (Escherichia coli O6:H1 (strain CFT073 / ATCC 700928 / UPEC)).